The sequence spans 397 residues: Arginine biosynthesis bifunctional protein ArgJ (397 aa).

Threonine 143, lysine 169, threonine 180, glutamate 266, asparagine 392, and threonine 397 together coordinate substrate. The active-site Nucleophile is the threonine 180.

The protein belongs to the ArgJ family. In terms of assembly, heterotetramer of two alpha and two beta chains.

It localises to the cytoplasm. The enzyme catalyses N(2)-acetyl-L-ornithine + L-glutamate = N-acetyl-L-glutamate + L-ornithine. It catalyses the reaction L-glutamate + acetyl-CoA = N-acetyl-L-glutamate + CoA + H(+). It functions in the pathway amino-acid biosynthesis; L-arginine biosynthesis; L-ornithine and N-acetyl-L-glutamate from L-glutamate and N(2)-acetyl-L-ornithine (cyclic): step 1/1. It participates in amino-acid biosynthesis; L-arginine biosynthesis; N(2)-acetyl-L-ornithine from L-glutamate: step 1/4. Competitively inhibited by L-ornithine. Functionally, catalyzes two activities which are involved in the cyclic version of arginine biosynthesis: the synthesis of N-acetylglutamate from glutamate and acetyl-CoA as the acetyl donor, and of ornithine by transacetylation between N(2)-acetylornithine and glutamate. In Thermotoga neapolitana (strain ATCC 49049 / DSM 4359 / NBRC 107923 / NS-E), this protein is Arginine biosynthesis bifunctional protein ArgJ.